Here is a 330-residue protein sequence, read N- to C-terminus: Ribosome production factor 1 (330 aa).

2 disordered regions span residues 1-32 (MKAV…FPPT) and 53-83 (EEKR…KEVP). Residues 55–70 (KRKKRMELKKKKKKER) show a composition bias toward basic residues. The span at 71 to 83 (KALDDKAPPKEVP) shows a compositional bias: basic and acidic residues. The region spanning 123 to 306 (PKVLITTSDR…LRSLQKGTFD (184 aa)) is the Brix domain. The tract at residues 284–301 (VGIQELGPRFTLKLRSLQ) is RNA-binding.

Its subcellular location is the nucleus. It localises to the nucleolus. Its function is as follows. May be required for ribosome biogenesis. This chain is Ribosome production factor 1 (rpf1), found in Danio rerio (Zebrafish).